We begin with the raw amino-acid sequence, 472 residues long: Nuclear receptor subfamily 0 group B member 1 (472 aa).

3 repeat units span residues 1–67, 68–135, and 136–202. Residues 1–255 form a 4 X 67 AA tandem repeats region; the sequence is MAGEDHPWHG…RPIALKDPQV (255 aa). Short sequence motifs (LXXLL motif) lie at residues 13-17, 80-84, and 148-152; these read LYNLL, LYSML, and LYSLL. One can recognise an NR LBD domain in the interval 190 to 471; it reads QSTQAMAFLY…DMMLEMLCAK (282 aa). A 4; truncated repeat occupies 203 to 255; sequence VCCEEQPQQSSVASDTPVRADQTPAAPQEQPRAPWWDTSSGVQRPIALKDPQV. Disordered stretches follow at residues 214–237 and 326–345; these read VASD…RAPW and RRQE…EQPQ. The short motif at 463 to 468 is the AF-2 motif element; it reads MMLEML.

The protein belongs to the nuclear hormone receptor family. NR0 subfamily. As to quaternary structure, homodimer. Interacts with NR5A1, NR5A2, NR0B2 and with COPS2. Interacts with ESRRB; represses ESRRB activity at the GATA6 promoter.

It is found in the nucleus. It localises to the cytoplasm. Nuclear receptor that lacks a DNA-binding domain and acts as a corepressor that inhibits the transcriptional activity of other nuclear receptors through heterodimeric interactions. Component of a cascade required for the development of the hypothalamic-pituitary-adrenal-gonadal axis. May also have a role in the development of the embryo and in the maintenance of embryonic stem cell pluripotency. In Rattus norvegicus (Rat), this protein is Nuclear receptor subfamily 0 group B member 1 (Nr0b1).